Reading from the N-terminus, the 243-residue chain is MRKTVIAGNWKMHMTCSSAKEYIDKFIPFSKEFPSDRHVVIAPPFTAISTLASLLQGTNIQLSSQNVHWEDTGAFTAEISPSMLLEHDVRYAIVGHSEPRKYFSESDEQINLRARSAQSNGLIPIVCVGESIEQRERGEAERVIRRQVEQGLEQTDLTKLVIAYEPIWAIGTGKTCESNEANRICGLIREWAGFSDLIIQYGGSVKPANIDEIMSMSDIDGVLVGGASLDPENFARIANYQSI.

9–11 (NWK) serves as a coordination point for substrate. The active-site Electrophile is histidine 96. The active-site Proton acceptor is glutamate 165. Residues glycine 171, serine 204, and 225–226 (GG) contribute to the substrate site.

It belongs to the triosephosphate isomerase family. As to quaternary structure, homodimer.

Its subcellular location is the cytoplasm. It carries out the reaction D-glyceraldehyde 3-phosphate = dihydroxyacetone phosphate. It participates in carbohydrate biosynthesis; gluconeogenesis. Its pathway is carbohydrate degradation; glycolysis; D-glyceraldehyde 3-phosphate from glycerone phosphate: step 1/1. In terms of biological role, involved in the gluconeogenesis. Catalyzes stereospecifically the conversion of dihydroxyacetone phosphate (DHAP) to D-glyceraldehyde-3-phosphate (G3P). The polypeptide is Triosephosphate isomerase (Prochlorococcus marinus (strain SARG / CCMP1375 / SS120)).